The primary structure comprises 341 residues: Fructose-1,6-bisphosphatase, cytosolic (341 aa).

Mg(2+)-binding residues include Glu-71, Glu-100, Asp-121, Leu-123, and Asp-124. Residues 124-127 (DGSS), Asn-215, Tyr-247, Tyr-267, and Lys-277 contribute to the substrate site. Glu-283 is a binding site for Mg(2+).

Belongs to the FBPase class 1 family. Mg(2+) serves as cofactor.

The protein localises to the cytoplasm. The catalysed reaction is beta-D-fructose 1,6-bisphosphate + H2O = beta-D-fructose 6-phosphate + phosphate. The chain is Fructose-1,6-bisphosphatase, cytosolic from Spinacia oleracea (Spinach).